Consider the following 92-residue polypeptide: Probable Fe(2+)-trafficking protein (92 aa).

This sequence belongs to the Fe(2+)-trafficking protein family.

Could be a mediator in iron transactions between iron acquisition and iron-requiring processes, such as synthesis and/or repair of Fe-S clusters in biosynthetic enzymes. The polypeptide is Probable Fe(2+)-trafficking protein (Shewanella oneidensis (strain ATCC 700550 / JCM 31522 / CIP 106686 / LMG 19005 / NCIMB 14063 / MR-1)).